Here is a 474-residue protein sequence, read N- to C-terminus: MAQHDFVPAWLNFSTPQSAKSPTATFEKHGEHLPRGEGRFGVSRRRHNSSDGFFNNGPLRTAGDSWHQPSLFRHDSVDSGVSKGAYAGITGNPSGWHSSSRGHDGMSQRSGGGTGNHRHWNGSFHSRKGCAFQEKPPMEIREEKKEDKVEKLQFEEEDFPSLNPEAGKQHQPCRPIGTPSGVWENPPSAKQPSKMLVIKKVSKEDPAAAFSAAFTSPGSHHANGNKLSSVVPSVYKNLVPKPVPPPSKPNAWKANRMEHKSGSLSSSRESAFTSPISVTKPVVLASGAALSSPKESPSSTTPPIEISSSRLTKLTRRTTDRKSEFLKTLKDDRNGDFSENRDCDKLEDLEDNSTPEPKENGEEGCHQNGLALPVVEEGEVLSHSLEAEHRLLKAMGWQEYPENDENCLPLTEDELKEFHMKTEQLRRNGFGKNGFLQSRSSSLFSPWRSTCKAEFEDSDTETSSSETSDDDAWK.

Residues 17-42 form a disordered region; that stretch reads QSAKSPTATFEKHGEHLPRGEGRFGV. Residues 26–38 show a composition bias toward basic and acidic residues; sequence FEKHGEHLPRGEG. Phosphoserine is present on residues S49 and S76. Residues 91–191 form a disordered region; the sequence is GNPSGWHSSS…VWENPPSAKQ (101 aa). Residues 116–128 show a composition bias toward basic residues; that stretch reads NHRHWNGSFHSRK. The span at 136–154 shows a compositional bias: basic and acidic residues; the sequence is PPMEIREEKKEDKVEKLQF. A Phosphoserine modification is found at S202. The tract at residues 238–371 is disordered; that stretch reads LVPKPVPPPS…EEGCHQNGLA (134 aa). The span at 262–277 shows a compositional bias: polar residues; the sequence is GSLSSSRESAFTSPIS. A compositionally biased stretch (low complexity) spans 291 to 312; the sequence is SSPKESPSSTTPPIEISSSRLT. At S292 the chain carries Phosphoserine. T301 carries the phosphothreonine modification. 2 stretches are compositionally biased toward basic and acidic residues: residues 317 to 346 and 356 to 365; these read RTTD…CDKL and EPKENGEEGC. S382 carries the phosphoserine modification. The disordered stretch occupies residues 453–474; that stretch reads AEFEDSDTETSSSETSDDDAWK.

It belongs to the vasculin family.

The protein localises to the nucleus. Functionally, possible transcription factor. This chain is Vasculin-like protein 1 (GPBP1L1), found in Homo sapiens (Human).